The chain runs to 387 residues: Chaperone protein DnaJ (387 aa).

A J domain is found at 6-71 (DYYEILGVPR…EKRRKYDQFG (66 aa)). The CR-type zinc-finger motif lies at 146 to 228 (GCEKEIPIYR…CGGTGTVRRQ (83 aa)). Residues C159, C162, C176, C179, C202, C205, C216, and C219 each coordinate Zn(2+). CXXCXGXG motif repeat units follow at residues 159–166 (CSVCGGSG), 176–183 (CQKCGGTG), 202–209 (CDACGGVG), and 216–223 (CRECGGTG).

It belongs to the DnaJ family. Homodimer. It depends on Zn(2+) as a cofactor.

It is found in the cytoplasm. Its function is as follows. Participates actively in the response to hyperosmotic and heat shock by preventing the aggregation of stress-denatured proteins and by disaggregating proteins, also in an autonomous, DnaK-independent fashion. Unfolded proteins bind initially to DnaJ; upon interaction with the DnaJ-bound protein, DnaK hydrolyzes its bound ATP, resulting in the formation of a stable complex. GrpE releases ADP from DnaK; ATP binding to DnaK triggers the release of the substrate protein, thus completing the reaction cycle. Several rounds of ATP-dependent interactions between DnaJ, DnaK and GrpE are required for fully efficient folding. Also involved, together with DnaK and GrpE, in the DNA replication of plasmids through activation of initiation proteins. The polypeptide is Chaperone protein DnaJ (Caldicellulosiruptor saccharolyticus (strain ATCC 43494 / DSM 8903 / Tp8T 6331)).